We begin with the raw amino-acid sequence, 671 residues long: Phosphoenolpyruvate carboxykinase (ATP) 1 (671 aa).

Residues 1-10 are compositionally biased toward low complexity; it reads MSAGNGNATN. A disordered region spans residues 1 to 44; sequence MSAGNGNATNGDGGFSFPKGPVMPKITTGAAKRGSGVCHDDSGP. Ser-2 is subject to N-acetylserine. Ser-62 is subject to Phosphoserine. Thr-66 is modified (phosphothreonine). A disordered region spans residues 100–127; that stretch reads TRESGPKVVRGDPAEKKTDGSTTPAYAH. Residues 108-118 show a composition bias toward basic and acidic residues; that stretch reads VRGDPAEKKTD. Residue Arg-189 participates in substrate binding. The Ca(2+) site is built by His-270 and Asn-271. 2 residues coordinate substrate: Tyr-328 and Lys-334. Residues Lys-334, His-353, and 369–377 contribute to the ATP site; that span reads GLSGTGKTT. Lys-334 and His-353 together coordinate Mn(2+). Asp-390 contacts Mn(2+). Gly-404 contributes to the Ca(2+) binding site. ATP is bound by residues Glu-418, Arg-455, 574 to 575, Ile-575, and Thr-580; that span reads RI. Arg-455 provides a ligand contact to substrate.

Belongs to the phosphoenolpyruvate carboxykinase (ATP) family. As to quaternary structure, monomer. Requires Mn(2+) as cofactor. Expressed in cotyledons, flowers, siliques, seeds, leaves, stems and roots. Localized in mid-veins.

Its subcellular location is the cytoplasm. The enzyme catalyses oxaloacetate + ATP = phosphoenolpyruvate + ADP + CO2. It functions in the pathway carbohydrate biosynthesis; gluconeogenesis. Allosterically activated by calcium. It may represent the only case of a monomeric, allosteric enzyme. Its function is as follows. Involved in the gluconeogenesis. Catalyzes the conversion of oxaloacetate (OAA) to phosphoenolpyruvate (PEP) through direct phosphoryl transfer between the nucleoside triphosphate and OAA. This chain is Phosphoenolpyruvate carboxykinase (ATP) 1, found in Arabidopsis thaliana (Mouse-ear cress).